A 163-amino-acid polypeptide reads, in one-letter code: Neurotrophin-3 (163 aa).

The signal sequence occupies residues 1 to 3; sequence IQS. Residues 4–119 constitute a propeptide that is removed on maturation; that stretch reads TSMDQGILTE…VLNRTSRRKR (116 aa). N112 carries N-linked (GlcNAc...) asparagine glycosylation.

It belongs to the NGF-beta family.

It is found in the secreted. Its function is as follows. Seems to promote the survival of visceral and proprioceptive sensory neurons. This Eryx colubrinus colubrinus protein is Neurotrophin-3 (NTF3).